A 286-amino-acid chain; its full sequence is Ribosomal RNA small subunit methyltransferase A (286 aa).

Residues Asn-28, Leu-30, Gly-55, Glu-77, Asp-103, and Asn-123 each coordinate S-adenosyl-L-methionine.

This sequence belongs to the class I-like SAM-binding methyltransferase superfamily. rRNA adenine N(6)-methyltransferase family. RsmA subfamily.

Its subcellular location is the cytoplasm. The enzyme catalyses adenosine(1518)/adenosine(1519) in 16S rRNA + 4 S-adenosyl-L-methionine = N(6)-dimethyladenosine(1518)/N(6)-dimethyladenosine(1519) in 16S rRNA + 4 S-adenosyl-L-homocysteine + 4 H(+). In terms of biological role, specifically dimethylates two adjacent adenosines (A1518 and A1519) in the loop of a conserved hairpin near the 3'-end of 16S rRNA in the 30S particle. May play a critical role in biogenesis of 30S subunits. The chain is Ribosomal RNA small subunit methyltransferase A from Rhodopseudomonas palustris (strain BisB18).